Consider the following 373-residue polypeptide: 4-hydroxy-3-methylbut-2-en-1-yl diphosphate synthase (flavodoxin) (373 aa).

Residues Cys270, Cys273, Cys305, and Glu312 each contribute to the [4Fe-4S] cluster site.

The protein belongs to the IspG family. [4Fe-4S] cluster serves as cofactor.

The catalysed reaction is (2E)-4-hydroxy-3-methylbut-2-enyl diphosphate + oxidized [flavodoxin] + H2O + 2 H(+) = 2-C-methyl-D-erythritol 2,4-cyclic diphosphate + reduced [flavodoxin]. The protein operates within isoprenoid biosynthesis; isopentenyl diphosphate biosynthesis via DXP pathway; isopentenyl diphosphate from 1-deoxy-D-xylulose 5-phosphate: step 5/6. Functionally, converts 2C-methyl-D-erythritol 2,4-cyclodiphosphate (ME-2,4cPP) into 1-hydroxy-2-methyl-2-(E)-butenyl 4-diphosphate. The protein is 4-hydroxy-3-methylbut-2-en-1-yl diphosphate synthase (flavodoxin) of Klebsiella pneumoniae subsp. pneumoniae (strain ATCC 700721 / MGH 78578).